Here is a 101-residue protein sequence, read N- to C-terminus: Small ribosomal subunit protein bS6 (101 aa).

This sequence belongs to the bacterial ribosomal protein bS6 family.

Functionally, binds together with bS18 to 16S ribosomal RNA. This is Small ribosomal subunit protein bS6 from Arthrobacter sp. (strain FB24).